A 155-amino-acid polypeptide reads, in one-letter code: RNA pyrophosphohydrolase (155 aa).

In terms of domain architecture, Nudix hydrolase spans 5 to 147 (KYRPNVAAII…KRQVYRQVIA (143 aa)). Residues 42–63 (GGIDEGETPLEALYRELLEEIG) carry the Nudix box motif.

This sequence belongs to the Nudix hydrolase family. RppH subfamily. A divalent metal cation serves as cofactor.

Functionally, accelerates the degradation of transcripts by removing pyrophosphate from the 5'-end of triphosphorylated RNA, leading to a more labile monophosphorylated state that can stimulate subsequent ribonuclease cleavage. The polypeptide is RNA pyrophosphohydrolase (Helicobacter pylori (strain P12)).